Reading from the N-terminus, the 322-residue chain is Lactamase-like protein nscB (322 aa).

Positions 97, 99, 101, and 102 each coordinate Zn(2+). The active-site Proton donor/acceptor is the Asp101.

The protein belongs to the metallo-beta-lactamase superfamily. The cofactor is Zn(2+).

The protein operates within secondary metabolite biosynthesis. Functionally, lactamase-like protein; part of the gene cluster that mediates the biosynthesis of neosartoricin B, a prenylated anthracenone that probably exhibits T-cell antiproliferative activity, suggestive of a physiological role as an immunosuppressive agent. The non-reducing polyketide synthase nscA probably synthesizes and cyclizes the decaketide backbone. The hydrolase nscB then mediates the product release through hydrolysis followed by spontaneous decarboxylation. The prenyltransferase nscD catalyzes the addition of the dimethylallyl group to the aromatic C5. The FAD-dependent monooxygenase nscC is then responsible for the stereospecific hydroxylation at C2. Neosartoricin B can be converted into two additional compounds neosartoricins C and D. Neosartoricin C is a spirocyclic compound that is cyclized through the attack of C3 hydroxyl on C14, followed by dehydration. On the other hand, neosartoricin D is a further cyclized compound in which attack of C2 on C14 in neosartoricin C results in the formation of the acetal-containing dioxabicyclo-octanone ring. Both of these compounds are novel and possibly represent related metabolites of the gene cluster. In Trichophyton rubrum (strain ATCC MYA-4607 / CBS 118892) (Athlete's foot fungus), this protein is Lactamase-like protein nscB.